The following is an 89-amino-acid chain: Small ribosomal subunit protein uS19 (89 aa).

Belongs to the universal ribosomal protein uS19 family.

Protein S19 forms a complex with S13 that binds strongly to the 16S ribosomal RNA. The chain is Small ribosomal subunit protein uS19 from Brachyspira hyodysenteriae (strain ATCC 49526 / WA1).